The chain runs to 995 residues: DExH-box ATP-dependent RNA helicase DExH1 (995 aa).

Disordered regions lie at residues 1–42 (MPPH…EQRW) and 156–192 (KTTQ…ASKL). A compositionally biased stretch (gly residues) spans 25-37 (RGGGGRGGGGGGR). The span at 161–170 (SGSSGASASA) shows a compositional bias: low complexity. Positions 171–181 (FNDQQDRTSTL) are enriched in polar residues. A Helicase ATP-binding domain is found at 238–405 (LNSVSQNQVL…FGNSPTMHIP (168 aa)). Position 251–258 (251–258 (GETGCGKT)) interacts with ATP. The DEIH box signature appears at 352–355 (DEIH). The disordered stretch occupies residues 429-450 (SSDSGNYQGSSRGRRRESESKK). In terms of domain architecture, Helicase C-terminal spans 484–663 (QIDVDLVEAT…ELCLHIKSLQ (180 aa)).

This sequence belongs to the DExH box helicase family.

The catalysed reaction is ATP + H2O = ADP + phosphate + H(+). The sequence is that of DExH-box ATP-dependent RNA helicase DExH1 from Arabidopsis thaliana (Mouse-ear cress).